Reading from the N-terminus, the 462-residue chain is dTDP-4-dehydro-2,6-dideoxy-D-glucose 3-dehydratase (462 aa).

Pyridoxal 5'-phosphate is bound by residues 112–113 (GS), D220, and S241. Residue H246 is the Proton donor/acceptor of the active site. N314 provides a ligand contact to pyridoxal 5'-phosphate.

The protein belongs to the DegT/DnrJ/EryC1 family. As to quaternary structure, homodimer. Pyridoxal 5'-phosphate is required as a cofactor.

It catalyses the reaction dTDP-4-dehydro-2,6-dideoxy-alpha-D-glucose + 2 reduced [2Fe-2S]-[ferredoxin] + 2 H(+) = dTDP-4-dehydro-2,3,6-trideoxy-alpha-D-hexopyranose + 2 oxidized [2Fe-2S]-[ferredoxin] + H2O. Its function is as follows. Involved in the biosynthesis of forosamine ((4-dimethylamino)-2,3,4,6-tetradeoxy-alpha-D-threo-hexopyranose), a highly deoxygenated sugar component of several bioactive natural products such as the insecticidal spinosyns A and D. Catalyzes C-3 deoxygenation of dTDP-4-keto-2,6-dideoxy-alpha-D-glucose to yield dTDP-4-keto-2,3,6-trideoxy-D-glucose via a combined transamination-deoxygenation reaction. The catalysis is initiated by a transamination step in which pyridoxal 5'-phosphate (PLP) is converted to pyridoxamine 5'-phosphate (PMP) in the presence of L-glutamate. This coenzyme then forms a Schiff base with dTDP-4-keto-2,6-dideoxy-alpha-D-glucose and the resulting adduct undergoes a PMP-mediated beta-dehydration reaction to give a sugar enamine intermediate, which after a 2 electrons reduction and hydrolysis yields dTDP-4-keto-2,3,6-trideoxy-D-glucose as a product. Requires cellular reductase (ferredoxin or flavodoxin reductase) rather than a specific partner reductase. L-glutamate is 20-fold more efficient than L-aspartate as an amino donor. In the absence of an electron source and in the presence of L-glutamate, catalyzes a transamination reaction, converting dTDP-4-keto-2,6-dideoxy-alpha-D-glucose to dTDP-4-amino-2,4,6-trideoxy-D-glucose. In Saccharopolyspora spinosa, this protein is dTDP-4-dehydro-2,6-dideoxy-D-glucose 3-dehydratase.